A 330-amino-acid polypeptide reads, in one-letter code: ADP-L-glycero-D-manno-heptose-6-epimerase (330 aa).

Residues 11–12, 32–33, Lys-39, Lys-54, 75–79, and Asn-92 contribute to the NADP(+) site; these read FI, DN, and EGACS. Tyr-139 (proton acceptor) is an active-site residue. Lys-143 is a binding site for NADP(+). Residue Asn-168 coordinates substrate. Positions 169 and 177 each coordinate NADP(+). Catalysis depends on Lys-177, which acts as the Proton acceptor. Residues Arg-179, His-186, 200–203, Arg-213, and Tyr-292 each bind substrate; that span reads FGEY.

The protein belongs to the NAD(P)-dependent epimerase/dehydratase family. HldD subfamily. As to quaternary structure, homopentamer. NADP(+) is required as a cofactor.

The enzyme catalyses ADP-D-glycero-beta-D-manno-heptose = ADP-L-glycero-beta-D-manno-heptose. It functions in the pathway nucleotide-sugar biosynthesis; ADP-L-glycero-beta-D-manno-heptose biosynthesis; ADP-L-glycero-beta-D-manno-heptose from D-glycero-beta-D-manno-heptose 7-phosphate: step 4/4. Catalyzes the interconversion between ADP-D-glycero-beta-D-manno-heptose and ADP-L-glycero-beta-D-manno-heptose via an epimerization at carbon 6 of the heptose. The chain is ADP-L-glycero-D-manno-heptose-6-epimerase from Burkholderia mallei (strain NCTC 10247).